The following is a 277-amino-acid chain: Pantothenate synthetase (277 aa).

26 to 33 (MGNLHEGH) lines the ATP pocket. The active-site Proton donor is the H33. Q57 provides a ligand contact to (R)-pantoate. Q57 serves as a coordination point for beta-alanine. 144–147 (GKKD) lines the ATP pocket. Q150 contributes to the (R)-pantoate binding site. ATP is bound by residues G173 and 181–184 (LSSR).

This sequence belongs to the pantothenate synthetase family. In terms of assembly, homodimer.

It is found in the cytoplasm. It carries out the reaction (R)-pantoate + beta-alanine + ATP = (R)-pantothenate + AMP + diphosphate + H(+). Its pathway is cofactor biosynthesis; (R)-pantothenate biosynthesis; (R)-pantothenate from (R)-pantoate and beta-alanine: step 1/1. Its function is as follows. Catalyzes the condensation of pantoate with beta-alanine in an ATP-dependent reaction via a pantoyl-adenylate intermediate. This chain is Pantothenate synthetase, found in Chromobacterium violaceum (strain ATCC 12472 / DSM 30191 / JCM 1249 / CCUG 213 / NBRC 12614 / NCIMB 9131 / NCTC 9757 / MK).